The primary structure comprises 40 residues: Photosystem II reaction center protein J (40 aa).

A helical transmembrane segment spans residues 8–28; the sequence is IPLWIIGTVTGIFGIGLIGIF.

Belongs to the PsbJ family. PSII is composed of 1 copy each of membrane proteins PsbA, PsbB, PsbC, PsbD, PsbE, PsbF, PsbH, PsbI, PsbJ, PsbK, PsbL, PsbM, PsbT, PsbX, PsbY, PsbZ, Psb30/Ycf12, at least 3 peripheral proteins of the oxygen-evolving complex and a large number of cofactors. It forms dimeric complexes.

The protein localises to the plastid membrane. One of the components of the core complex of photosystem II (PSII). PSII is a light-driven water:plastoquinone oxidoreductase that uses light energy to abstract electrons from H(2)O, generating O(2) and a proton gradient subsequently used for ATP formation. It consists of a core antenna complex that captures photons, and an electron transfer chain that converts photonic excitation into a charge separation. In Cuscuta reflexa (Southern Asian dodder), this protein is Photosystem II reaction center protein J.